The sequence spans 458 residues: Repulsive guidance molecule A (458 aa).

Residues 1-53 (MGGPGPRRAGTSRERLVVTGRAGWMGMGRGAGRSALGFWPTLAFLLCSFPAAT) form the signal peptide. Positions 54–176 (SPCKILKCNS…NYTHCGLFGD (123 aa)) are cleaved as a propeptide — removed in mature form. Residues 121-133 (HNCSKDGPTSQPR) show a composition bias toward polar residues. The tract at residues 121-149 (HNCSKDGPTSQPRLHTLPPAGDSQERSDS) is disordered. 2 N-linked (GlcNAc...) asparagine glycosylation sites follow: Asn-122 and Asn-167. Disulfide bonds link Cys-153/Cys-234 and Cys-171/Cys-323. An N-linked (GlcNAc...) asparagine glycan is attached at Asn-397. Residue Ala-433 is the site of GPI-anchor amidated alanine attachment. Residues 434–458 (AGLPLAPQPLLGALILLLALFPVFC) constitute a propeptide, removed in mature form.

The protein belongs to the repulsive guidance molecule (RGM) family. As to quaternary structure, interacts with NEO1, BMP2 and BMP4. Autocatalytically cleaved at low pH; the two chains remain linked via two disulfide bonds.

Its subcellular location is the cell membrane. Its function is as follows. Member of the repulsive guidance molecule (RGM) family that performs several functions in the developing and adult nervous system. Regulates cephalic neural tube closure, inhibits neurite outgrowth and cortical neuron branching, and the formation of mature synapses. Binding to its receptor NEO1/neogenin induces activation of RHOA-ROCK1/Rho-kinase signaling pathway through UNC5B-ARHGEF12/LARG-PTK2/FAK1 cascade, leading to collapse of the neuronal growth cone and neurite outgrowth inhibition. Furthermore, RGMA binding to NEO1/neogenin leads to HRAS inactivation by influencing HRAS-PTK2/FAK1-AKT1 pathway. It also functions as a bone morphogenetic protein (BMP) coreceptor that may signal through SMAD1, SMAD5, and SMAD8. The protein is Repulsive guidance molecule A (RGMA) of Macaca fascicularis (Crab-eating macaque).